The sequence spans 219 residues: Uracil-DNA glycosylase (219 aa).

Aspartate 59 acts as the Proton acceptor in catalysis.

The protein belongs to the uracil-DNA glycosylase (UDG) superfamily. UNG family.

It localises to the cytoplasm. The enzyme catalyses Hydrolyzes single-stranded DNA or mismatched double-stranded DNA and polynucleotides, releasing free uracil.. Functionally, excises uracil residues from the DNA which can arise as a result of misincorporation of dUMP residues by DNA polymerase or due to deamination of cytosine. The polypeptide is Uracil-DNA glycosylase (Staphylococcus haemolyticus (strain JCSC1435)).